We begin with the raw amino-acid sequence, 197 residues long: dTTP/UTP pyrophosphatase (197 aa).

D70 serves as the catalytic Proton acceptor.

Belongs to the Maf family. YhdE subfamily. A divalent metal cation serves as cofactor.

The protein localises to the cytoplasm. It carries out the reaction dTTP + H2O = dTMP + diphosphate + H(+). It catalyses the reaction UTP + H2O = UMP + diphosphate + H(+). In terms of biological role, nucleoside triphosphate pyrophosphatase that hydrolyzes dTTP and UTP. May have a dual role in cell division arrest and in preventing the incorporation of modified nucleotides into cellular nucleic acids. This chain is dTTP/UTP pyrophosphatase, found in Yersinia pestis bv. Antiqua (strain Antiqua).